The primary structure comprises 115 residues: Macroconotoxin Mu8.1 (115 aa).

The N-terminal stretch at 1–21 (MDMKMTFSGLVLVVLVTTVVG) is a signal peptide. Residues 22–26 (SSVRR) constitute a propeptide that is removed on maturation. 5 disulfide bridges follow: Cys36–Cys77, Cys44–Cys60, Cys48–Cys56, Cys83–Cys115, and Cys87–Cys97. Glu40 is a binding site for Zn(2+). His68 provides a ligand contact to Zn(2+).

As to quaternary structure, mostly found as a homodimer in solution; non-covalently bound. As to expression, expressed by the venom duct.

It localises to the secreted. Functionally, modestly and reversibly inhibits Cav2.3/CACNA1E (IC(50)=5.8 uM) recombinantly expressed in HEK293 cells without affecting the voltage dependence of activation. In mouse DRG sensory neurons, modulates depolarization-induced calcium influx. The sequence is that of Macroconotoxin Mu8.1 from Conus mucronatus (Pointed cone).